The sequence spans 223 residues: N-terminal Xaa-Pro-Lys N-methyltransferase 1 (223 aa).

N-acetylmethionine is present on M1. T2 is modified (N-acetylthreonine; in N-terminal Xaa-Pro-Lys N-methyltransferase 1, N-terminally processed). Residues G69, R74, 91–93 (DVT), 119–120 (LQ), and Q135 contribute to the S-adenosyl-L-methionine site.

This sequence belongs to the methyltransferase superfamily. NTM1 family.

It is found in the nucleus. It catalyses the reaction N-terminal L-alanyl-L-prolyl-L-lysyl-[protein] + 3 S-adenosyl-L-methionine = N-terminal N,N,N-trimethyl-L-alanyl-L-prolyl-L-lysyl-[protein] + 3 S-adenosyl-L-homocysteine + 3 H(+). The enzyme catalyses N-terminal L-seryl-L-prolyl-L-lysyl-[protein] + 3 S-adenosyl-L-methionine = N-terminal N,N,N-trimethyl-L-seryl-L-prolyl-L-lysyl-[protein] + 3 S-adenosyl-L-homocysteine + 3 H(+). The catalysed reaction is N-terminal L-prolyl-L-prolyl-L-lysyl-[protein] + 2 S-adenosyl-L-methionine = N-terminal N,N-dimethyl-L-prolyl-L-prolyl-L-lysyl-[protein] + 2 S-adenosyl-L-homocysteine + 2 H(+). Distributive alpha-N-methyltransferase that methylates the N-terminus of target proteins containing the N-terminal motif [Ala/Gly/Pro/Ser]-Pro-Lys when the initiator Met is cleaved. Specifically catalyzes mono-, di- or tri-methylation of the exposed alpha-amino group of the Ala, Gly or Ser residue in the [Ala/Gly/Ser]-Pro-Lys motif and mono- or di-methylation of Pro in the Pro-Pro-Lys motif. Some of the substrates may be primed by NTMT2-mediated monomethylation. Catalyzes the trimethylation of the N-terminal Gly in CENPA (after removal of Met-1). Responsible for the N-terminal methylation of KLHL31, MYL2, MYL3, RB1, RCC1, RPL23A and SET. Required during mitosis for normal bipolar spindle formation and chromosome segregation via its action on RCC1. The polypeptide is N-terminal Xaa-Pro-Lys N-methyltransferase 1 (Ntmt1) (Mus musculus (Mouse)).